A 345-amino-acid polypeptide reads, in one-letter code: UDP-3-O-acylglucosamine N-acyltransferase (345 aa).

His241 serves as the catalytic Proton acceptor.

The protein belongs to the transferase hexapeptide repeat family. LpxD subfamily. In terms of assembly, homotrimer.

It carries out the reaction a UDP-3-O-[(3R)-3-hydroxyacyl]-alpha-D-glucosamine + a (3R)-hydroxyacyl-[ACP] = a UDP-2-N,3-O-bis[(3R)-3-hydroxyacyl]-alpha-D-glucosamine + holo-[ACP] + H(+). The protein operates within bacterial outer membrane biogenesis; LPS lipid A biosynthesis. Its function is as follows. Catalyzes the N-acylation of UDP-3-O-acylglucosamine using 3-hydroxyacyl-ACP as the acyl donor. Is involved in the biosynthesis of lipid A, a phosphorylated glycolipid that anchors the lipopolysaccharide to the outer membrane of the cell. This Desulfotalea psychrophila (strain LSv54 / DSM 12343) protein is UDP-3-O-acylglucosamine N-acyltransferase.